A 156-amino-acid polypeptide reads, in one-letter code: Protein CROC-4 (156 aa).

Residues Arg-46–Gly-71 are disordered. A compositionally biased stretch (low complexity) spans Thr-48–Ser-59.

In terms of tissue distribution, expressed throughout the brain in the thalamus, subthalamic nucleus, corpus callosum, hippocampus, substantia nigra, caudate nucleus, and amygdala.

It localises to the nucleus. May play a role in FOS signaling pathways involved in development and remodeling of neurons. Promotes transcription of the FOS promoter. The sequence is that of Protein CROC-4 from Homo sapiens (Human).